The sequence spans 478 residues: Alpha,alpha-trehalose-phosphate synthase [UDP-forming] (478 aa).

2 residues coordinate D-glucose 6-phosphate: Tyr89 and Asp143. Positions 280 and 285 each coordinate UDP. UDP-alpha-D-glucose is bound by residues Arg280 and Lys285. Arg318 contributes to the D-glucose 6-phosphate binding site. UDP is bound by residues Ile357 and 383 to 387; that span reads LVSYE. UDP-alpha-D-glucose contacts are provided by residues Ile357 and 379–387; that span reads DGMNLVSYE.

This sequence belongs to the glycosyltransferase 20 family.

The catalysed reaction is D-glucose 6-phosphate + UDP-alpha-D-glucose = alpha,alpha-trehalose 6-phosphate + UDP + H(+). It functions in the pathway carbohydrate biosynthesis. With respect to regulation, inhibited by validoxylamine A, a non-reactive trehalose analog. Functionally, synthase catalytic subunit of the trehalose synthase complex that catalyzes the production of trehalose from glucose-6-phosphate and UDP-alpha-D-glucose in a two step process. In Candida albicans (strain SC5314 / ATCC MYA-2876) (Yeast), this protein is Alpha,alpha-trehalose-phosphate synthase [UDP-forming].